The following is a 374-amino-acid chain: Cytochrome b (374 aa).

Transmembrane regions (helical) follow at residues 25–45, 69–90, 105–125, and 170–190; these read FGSMLLTCLMLQITTGFFLAI, WIIQNTHAMGASMFFICIYMHI, WLSGVSLLITLMATAFFGYVL, and FFALHFILPFIIISLSSIHII. Positions 75 and 89 each coordinate heme b. Heme b contacts are provided by His-174 and His-188. His-193 is an a ubiquinone binding site. Helical transmembrane passes span 218 to 238, 280 to 300, 312 to 332, and 339 to 358; these read YKDMLMTTILISILFYILSFT, LGGALALLLSIIILTSAPFTH, LAQILFWILATAFITITWTAT, and FITISQWTSTLYFSFFMINP.

The protein belongs to the cytochrome b family. As to quaternary structure, the cytochrome bc1 complex contains 3 respiratory subunits (MT-CYB, CYC1 and UQCRFS1), 2 core proteins (UQCRC1 and UQCRC2) and probably 6 low-molecular weight proteins. Heme b is required as a cofactor.

The protein resides in the mitochondrion inner membrane. Its function is as follows. Component of the ubiquinol-cytochrome c reductase complex (complex III or cytochrome b-c1 complex) that is part of the mitochondrial respiratory chain. The b-c1 complex mediates electron transfer from ubiquinol to cytochrome c. Contributes to the generation of a proton gradient across the mitochondrial membrane that is then used for ATP synthesis. This chain is Cytochrome b (MT-CYB), found in Calliophis bivirgatus (Blue Malaysian coral snake).